The following is a 311-amino-acid chain: Aspartate carbamoyltransferase catalytic subunit (311 aa).

Carbamoyl phosphate contacts are provided by Arg-55 and Thr-56. L-aspartate is bound at residue Lys-85. Residues Arg-106, His-135, and Gln-138 each coordinate carbamoyl phosphate. Positions 168 and 230 each coordinate L-aspartate. Carbamoyl phosphate is bound by residues Leu-268 and Pro-269.

This sequence belongs to the aspartate/ornithine carbamoyltransferase superfamily. ATCase family. As to quaternary structure, heterododecamer (2C3:3R2) of six catalytic PyrB chains organized as two trimers (C3), and six regulatory PyrI chains organized as three dimers (R2).

The catalysed reaction is carbamoyl phosphate + L-aspartate = N-carbamoyl-L-aspartate + phosphate + H(+). It functions in the pathway pyrimidine metabolism; UMP biosynthesis via de novo pathway; (S)-dihydroorotate from bicarbonate: step 2/3. Functionally, catalyzes the condensation of carbamoyl phosphate and aspartate to form carbamoyl aspartate and inorganic phosphate, the committed step in the de novo pyrimidine nucleotide biosynthesis pathway. This is Aspartate carbamoyltransferase catalytic subunit from Klebsiella pneumoniae subsp. pneumoniae (strain ATCC 700721 / MGH 78578).